The sequence spans 217 residues: Adenylate kinase (217 aa).

10–15 contributes to the ATP binding site; it reads GAGKGT. Residues 30 to 59 are NMP; it reads STGDIFRANIKNNTELGAKAKEYMDQGLLV. AMP is bound by residues Thr31, Arg36, 57–59, 85–88, and Gln92; these read LLV and GFPR. The interval 126-163 is LID; sequence GRRACVSCGGTYHVVFTPTKKEGICDACGGELTIRDDD. Arg127 provides a ligand contact to ATP. Zn(2+)-binding residues include Cys130 and Cys133. Position 136–137 (136–137) interacts with ATP; that stretch reads TY. Residues Cys150 and Cys153 each coordinate Zn(2+). Residues Arg160 and Arg171 each contribute to the AMP site. Lys199 contributes to the ATP binding site.

This sequence belongs to the adenylate kinase family. In terms of assembly, monomer.

The protein localises to the cytoplasm. The enzyme catalyses AMP + ATP = 2 ADP. Its pathway is purine metabolism; AMP biosynthesis via salvage pathway; AMP from ADP: step 1/1. In terms of biological role, catalyzes the reversible transfer of the terminal phosphate group between ATP and AMP. Plays an important role in cellular energy homeostasis and in adenine nucleotide metabolism. This Lachnoclostridium phytofermentans (strain ATCC 700394 / DSM 18823 / ISDg) (Clostridium phytofermentans) protein is Adenylate kinase.